The following is a 111-amino-acid chain: MQRERTNETSLRVVSKEKDSIIVEMINYDNTLLRTLVEEILKDDQVIEARYYIKHPIIDNPQIYVKVKSGKPQAAIKRSIRKLSKLYEDLGAQVEKEIEKYRSNHIIKTTE.

This sequence belongs to the archaeal Rpo11/eukaryotic RPB11/RPC19 RNA polymerase subunit family. Part of the RNA polymerase complex.

Its subcellular location is the cytoplasm. The enzyme catalyses RNA(n) + a ribonucleoside 5'-triphosphate = RNA(n+1) + diphosphate. DNA-dependent RNA polymerase (RNAP) catalyzes the transcription of DNA into RNA using the four ribonucleoside triphosphates as substrates. In Thermoplasma volcanium (strain ATCC 51530 / DSM 4299 / JCM 9571 / NBRC 15438 / GSS1), this protein is DNA-directed RNA polymerase subunit Rpo11.